A 310-amino-acid chain; its full sequence is Acetylglutamate kinase (310 aa).

Residues 70–71, Arg-92, and Asn-191 each bind substrate; that span reads GG.

The protein belongs to the acetylglutamate kinase family. ArgB subfamily.

Its subcellular location is the cytoplasm. The catalysed reaction is N-acetyl-L-glutamate + ATP = N-acetyl-L-glutamyl 5-phosphate + ADP. The protein operates within amino-acid biosynthesis; L-arginine biosynthesis; N(2)-acetyl-L-ornithine from L-glutamate: step 2/4. In terms of biological role, catalyzes the ATP-dependent phosphorylation of N-acetyl-L-glutamate. The protein is Acetylglutamate kinase of Corynebacterium diphtheriae (strain ATCC 700971 / NCTC 13129 / Biotype gravis).